A 313-amino-acid polypeptide reads, in one-letter code: Cobalamin biosynthesis protein CobD (313 aa).

Helical transmembrane passes span 52–72 (VAGA…GAAL), 79–99 (CWPV…TSLA), 154–174 (VVPL…YRAI), 204–224 (YVGA…VGGS), and 289–309 (AVVL…MLVY).

The protein belongs to the CobD/CbiB family.

It is found in the cell membrane. It functions in the pathway cofactor biosynthesis; adenosylcobalamin biosynthesis. Functionally, converts cobyric acid to cobinamide by the addition of aminopropanol on the F carboxylic group. The polypeptide is Cobalamin biosynthesis protein CobD (Mycobacterium bovis (strain ATCC BAA-935 / AF2122/97)).